The sequence spans 201 residues: MFLCYCCCCYCFYYCIIVLLLYYYYYYYYYYYYGMSSIIFFLKIKKKIVQIYIFIYYSIWFFFFKCRRWLCFVYNWLVCTDGSCWTLIIGLYTGSHIWALTHCKHSSKSRGTLTVSPGAPPGTCSCSIRAVPSSSACKITAVARRAEVLVMVSRPGSNPGLESPSLSGDNSASWSTAAEIILSVMVVARDSTAPKPIPGKE.

This is an uncharacterized protein from Saccharomyces cerevisiae (strain ATCC 204508 / S288c) (Baker's yeast).